The sequence spans 161 residues: V-type proton ATPase subunit c (161 aa).

Residues 1–9 (MSTDLCPVY) lie on the Lumenal side of the membrane. A helical transmembrane segment spans residues 10-32 (APFFGVMGCTAAIVFASFGAAYG). Residues 33–54 (TAKAGVGISAMGVLRPDLIVKN) lie on the Cytoplasmic side of the membrane. The chain crosses the membrane as a helical span at residues 55–75 (TIPVVMAGIIAIYGLVVSVLI). Topologically, residues 76–91 (SGNLKQILSLYSGFIQ) are lumenal. Residues 92–113 (LGAGLSVGLAGLAAGFAIGIVG) form a helical membrane-spanning segment. Over 114–125 (DAGVRGTAQQPR) the chain is Cytoplasmic. Residues 126-151 (LFVAMILILIFAEVLGLYGLIVALLL) traverse the membrane as a helical segment. Residues 152 to 161 (NTRATDNVTC) are Lumenal-facing.

This sequence belongs to the V-ATPase proteolipid subunit family. In terms of assembly, V-ATPase is a heteromultimeric enzyme composed of a peripheral catalytic V1 complex (components A to H) attached to an integral membrane V0 proton pore complex (components: a, c, c', c'', d, e, f and VOA1). The decameric c-ring forms the proton-conducting pore, and is composed of eight proteolipid subunits c, one subunit c' and one subunit c''.

The protein resides in the vacuole membrane. In terms of biological role, proton-conducting pore forming subunit of the V0 complex of vacuolar(H+)-ATPase (V-ATPase), a multisubunit enzyme composed of a peripheral complex (V1) that hydrolyzes ATP and a membrane integral complex (V0) that translocates protons. V-ATPase is responsible for acidifying and maintaining the pH of intracellular compartments. The polypeptide is V-type proton ATPase subunit c (Schizosaccharomyces pombe (strain 972 / ATCC 24843) (Fission yeast)).